Reading from the N-terminus, the 366-residue chain is MYGILVLEDGTIIRGDGFGAETEVLGELVFNTSMTGYVEILTDPSYKGQIVTMTYPLEGNYGVEKEWFESDGIKAEGFVVKDMTGSKLDEFLKEYNIPGISGVDTRYITRKIRSKGVIRSLLKTSTNPITKDEETELIKKVVEYPDISEIDLVPEVSTKETVIYNAEDEKTRCVLIDCGVKQSIIDCLVERGCSVVKVPYNSKEEEIMSYNPDFVLVSNGPGDPENMAETVETVKNLIGTLPVTGICLGHQLITIALGGKTYKLKFGHRGGNQPVKDIDSGKVYITSQNHGFATDDKIVPEGSELMHMNLNDDTVEGIRKIESNDLKNTVWSVQYHPEAGPGPHDARFLFDEMVELGIKFKAEKAN.

Positions 1–168 (MYGILVLEDG…KETVIYNAED (168 aa)) are CPSase. Residues Ser-45, Gly-220, and Gly-222 each coordinate L-glutamine. Positions 172-363 (RCVLIDCGVK…VELGIKFKAE (192 aa)) constitute a Glutamine amidotransferase type-1 domain. Cys-247 acts as the Nucleophile in catalysis. L-glutamine-binding residues include Leu-248, Gln-251, Asn-289, Gly-291, and Phe-292. Catalysis depends on residues His-336 and Glu-338.

This sequence belongs to the CarA family. Composed of two chains; the small (or glutamine) chain promotes the hydrolysis of glutamine to ammonia, which is used by the large (or ammonia) chain to synthesize carbamoyl phosphate. Tetramer of heterodimers (alpha,beta)4.

It catalyses the reaction hydrogencarbonate + L-glutamine + 2 ATP + H2O = carbamoyl phosphate + L-glutamate + 2 ADP + phosphate + 2 H(+). The enzyme catalyses L-glutamine + H2O = L-glutamate + NH4(+). It functions in the pathway amino-acid biosynthesis; L-arginine biosynthesis; carbamoyl phosphate from bicarbonate: step 1/1. The protein operates within pyrimidine metabolism; UMP biosynthesis via de novo pathway; (S)-dihydroorotate from bicarbonate: step 1/3. Small subunit of the glutamine-dependent carbamoyl phosphate synthetase (CPSase). CPSase catalyzes the formation of carbamoyl phosphate from the ammonia moiety of glutamine, carbonate, and phosphate donated by ATP, constituting the first step of 2 biosynthetic pathways, one leading to arginine and/or urea and the other to pyrimidine nucleotides. The small subunit (glutamine amidotransferase) binds and cleaves glutamine to supply the large subunit with the substrate ammonia. This chain is Carbamoyl phosphate synthase small chain, found in Methanococcus maripaludis (strain C5 / ATCC BAA-1333).